Reading from the N-terminus, the 246-residue chain is Bis(5'-nucleosyl)-tetraphosphatase PrpE [asymmetrical] (246 aa).

It belongs to the PrpE family. It depends on Ni(2+) as a cofactor.

The catalysed reaction is P(1),P(4)-bis(5'-guanosyl) tetraphosphate + H2O = GMP + GTP + 2 H(+). Its function is as follows. Asymmetrically hydrolyzes Ap4p to yield AMP and ATP. The polypeptide is Bis(5'-nucleosyl)-tetraphosphatase PrpE [asymmetrical] (Bacillus cereus (strain AH187)).